A 260-amino-acid polypeptide reads, in one-letter code: F-actin-capping protein subunit beta (260 aa).

It belongs to the F-actin-capping protein beta subunit family. Component of the F-actin capping complex, composed of a heterodimer of an alpha and a beta subunit.

It is found in the cytoplasm. It localises to the cytoskeleton. Its subcellular location is the actin patch. In terms of biological role, F-actin-capping proteins bind in a Ca(2+)-independent manner to the fast growing ends of actin filaments (barbed end) thereby blocking the exchange of subunits at these ends. Unlike other capping proteins (such as gelsolin and severin), these proteins do not sever actin filaments. The sequence is that of F-actin-capping protein subunit beta (CAP2) from Yarrowia lipolytica (strain CLIB 122 / E 150) (Yeast).